The following is a 393-amino-acid chain: MRKKLTALVLSALPLAAVADVSLYGEIKAGVEGRNIQAQLTEQPQVTNGVQGNQVKVTKAKSRIRTKISDFGSFIGFKGSEDLGEGLKAVWQLEQDVSVAGGGASQWGNRESFIGLAGEFGTLRAGRVANQFDDASQAINPWDSNNDVASQLGIFKRHDDMPVSVRYDSPEFSGFSGSVQFVPAQNSKSAYKPAYYTKDTNNNLTLVPAVVGKPGSDVYYAGLNYKNGGFAGNYAFKYARHANVGRNAFELFLIGSATSDEAKGTDPLKNHQVHRLTGGYEEGGLNLALAAQLDLSENGDKAKTKNSTTEIAATASYRFGNAVPRISYAHGFDLIERGKKGENTSYDQIIAGVDYDFSKRTSAIVSGAWLKRNTGIGNYTQINAASVGLRHKF.

The first 19 residues, 1–19 (MRKKLTALVLSALPLAAVA), serve as a signal peptide directing secretion.

This sequence belongs to the Gram-negative porin family. Homotrimer.

The protein resides in the cell outer membrane. In terms of biological role, serves as a slightly cation selective porin. Major antigen on the gonococcal cell surface and it may have pathogenic properties in addition to its porin activity. This Neisseria meningitidis serogroup C protein is Major outer membrane protein P.IA (porA).